The chain runs to 513 residues: Histidine ammonia-lyase (513 aa).

A cross-link (5-imidazolinone (Ala-Gly)) is located at residues 142–144 (ASG). At serine 143 the chain carries 2,3-didehydroalanine (Ser).

Belongs to the PAL/histidase family. Post-translationally, contains an active site 4-methylidene-imidazol-5-one (MIO), which is formed autocatalytically by cyclization and dehydration of residues Ala-Ser-Gly.

It localises to the cytoplasm. It catalyses the reaction L-histidine = trans-urocanate + NH4(+). It participates in amino-acid degradation; L-histidine degradation into L-glutamate; N-formimidoyl-L-glutamate from L-histidine: step 1/3. The chain is Histidine ammonia-lyase from Roseobacter denitrificans (strain ATCC 33942 / OCh 114) (Erythrobacter sp. (strain OCh 114)).